Here is an 866-residue protein sequence, read N- to C-terminus: Autophagy-related protein 9 (866 aa).

Residues 1 to 94 (MMSSGHKGPN…KGLWCIIVKW (94 aa)) are Cytoplasmic-facing. A helical transmembrane segment spans residues 95–115 (AVELLSLGFIICFSGFFLLYV). Over 116-153 (DWNGLQNAKCGMDAVESGTKPCDLVKEAIHPHPLSPFT) the chain is Lumenal. Residues 154 to 174 (LTTAIIVGYLALFSVYWLFCF) traverse the membrane as a helical segment. At 175–319 (LRFFAQLKDT…VSNPTTLKKR (145 aa)) the chain is on the cytoplasmic side. The stretch at 320–340 (LFVVGLAMLLLSPFLVIFMLV) is an intramembrane region. Residues 341–404 (YLFLRHAEQF…LKQFPSPIIS (64 aa)) are Cytoplasmic-facing. Residues 405–425 (IIAKFVSFVSGGFAAVLIIIA) form a helical membrane-spanning segment. The Lumenal portion of the chain corresponds to 426–433 (FLEESLLE). Residues 434-454 (GHIFGRNLFWYAAVFGTITAI) form a helical membrane-spanning segment. Over 455-507 (SRAAISDELLVLDPVGTMSLVVQNTHYMPKRWRGKENKDDVRLELETLFQYTG) the chain is Cytoplasmic. An intramembrane segment occupies 508–528 (MMLLEEIASIFITPFLLMFVV). Residues 529–866 (PKRVDDILQF…ETSTSSTTLR (338 aa)) lie on the Cytoplasmic side of the membrane. Residues 744-781 (QPEGEDSYGSQHPLDGRNQWWGRGNHSQISTAHPATTN) form a disordered region. Residues 768–781 (NHSQISTAHPATTN) are compositionally biased toward polar residues.

Belongs to the ATG9 family. In terms of assembly, homotrimer; forms a homotrimer with a central pore that forms a path between the two membrane leaflets. In terms of tissue distribution, expressed in roots, leaves, stems and flowers.

The protein localises to the preautophagosomal structure membrane. In terms of biological role, phospholipid scramblase involved in autophagy by mediating autophagosomal membrane expansion. Cycles between the preautophagosomal structure/phagophore assembly site (PAS) and the cytoplasmic vesicle pool and supplies membrane for the growing autophagosome. Lipid scramblase activity plays a key role in preautophagosomal structure/phagophore assembly by distributing the phospholipids that arrive through ATG2 from the cytoplasmic to the luminal leaflet of the bilayer, thereby driving autophagosomal membrane expansion. In addition to autophagy, also plays a role in necrotic cell death. Plays an essential role in plant nutrient recycling. The polypeptide is Autophagy-related protein 9 (Arabidopsis thaliana (Mouse-ear cress)).